Reading from the N-terminus, the 190-residue chain is GMP synthase [glutamine-hydrolyzing] subunit A (190 aa).

Positions 2–189 constitute a Glutamine amidotransferase type-1 domain; it reads TILVINNKGQ…YEICKKRCNN (188 aa). Residue Cys76 is the Nucleophile of the active site. Active-site residues include His163 and Glu165.

Heterodimer composed of a glutamine amidotransferase subunit (A) and a GMP-binding subunit (B).

It carries out the reaction XMP + L-glutamine + ATP + H2O = GMP + L-glutamate + AMP + diphosphate + 2 H(+). Its pathway is purine metabolism; GMP biosynthesis; GMP from XMP (L-Gln route): step 1/1. In terms of biological role, catalyzes the synthesis of GMP from XMP. The chain is GMP synthase [glutamine-hydrolyzing] subunit A from Methanobrevibacter smithii (strain ATCC 35061 / DSM 861 / OCM 144 / PS).